Here is a 436-residue protein sequence, read N- to C-terminus: UPF0597 protein YhaM (436 aa).

Belongs to the UPF0597 family.

In Escherichia coli O7:K1 (strain IAI39 / ExPEC), this protein is UPF0597 protein YhaM.